A 74-amino-acid chain; its full sequence is UPF0235 protein tsr1994 (74 aa).

The protein belongs to the UPF0235 family.

The polypeptide is UPF0235 protein tsr1994 (Thermosynechococcus vestitus (strain NIES-2133 / IAM M-273 / BP-1)).